Here is a 215-residue protein sequence, read N- to C-terminus: Pyrrolidone-carboxylate peptidase (215 aa).

Residues Glu-81, Cys-144, and His-168 contribute to the active site.

It belongs to the peptidase C15 family. As to quaternary structure, homotetramer.

It is found in the cytoplasm. It carries out the reaction Release of an N-terminal pyroglutamyl group from a polypeptide, the second amino acid generally not being Pro.. Functionally, removes 5-oxoproline from various penultimate amino acid residues except L-proline. The sequence is that of Pyrrolidone-carboxylate peptidase (pcp) from Bacillus subtilis (strain 168).